The chain runs to 1102 residues: WD repeat-containing protein 72 (1102 aa).

WD repeat units follow at residues 15-54 (APPHSITAIMITDDQRTIVTGSQEGQLCLWNLSHELKISA), 60-102 (GHSA…CMEK), 160-197 (NCMCIVHSMRIQEDSLLVVSVAGELKVWDLSSSINSIQ), 318-362 (KEQS…VSKF), 402-441 (AGTAVVTSSEYIPSLDKLICGCEDGTIIITQALNAAKARL), 459-504 (GHHQ…ILHK), 507-552 (LEAG…CLLH), and 555-594 (KHLFPVRMIKWHPVENFLIVGCADDSVYIWEIETGTLERH). S1081 and S1083 each carry phosphoserine.

It localises to the cytoplasmic vesicle. In terms of biological role, plays a major role in formation of tooth enamel. Specifically required during the maturation phase of amelogenesis for normal formation of the enamel matrix and clearance of enamel proteins. May be involved in localization of the calcium transporter SLC24A4 to the ameloblast cell membrane. This chain is WD repeat-containing protein 72 (WDR72), found in Homo sapiens (Human).